We begin with the raw amino-acid sequence, 356 residues long: UDP-N-acetylglucosamine--N-acetylmuramyl-(pentapeptide) pyrophosphoryl-undecaprenol N-acetylglucosamine transferase (356 aa).

Residues 12 to 14, Asn124, Arg163, Ser188, Ile242, 261 to 266, and Gln287 contribute to the UDP-N-acetyl-alpha-D-glucosamine site; these read TGG and ALTVCE.

It belongs to the glycosyltransferase 28 family. MurG subfamily.

It is found in the cell inner membrane. It carries out the reaction di-trans,octa-cis-undecaprenyl diphospho-N-acetyl-alpha-D-muramoyl-L-alanyl-D-glutamyl-meso-2,6-diaminopimeloyl-D-alanyl-D-alanine + UDP-N-acetyl-alpha-D-glucosamine = di-trans,octa-cis-undecaprenyl diphospho-[N-acetyl-alpha-D-glucosaminyl-(1-&gt;4)]-N-acetyl-alpha-D-muramoyl-L-alanyl-D-glutamyl-meso-2,6-diaminopimeloyl-D-alanyl-D-alanine + UDP + H(+). The protein operates within cell wall biogenesis; peptidoglycan biosynthesis. Functionally, cell wall formation. Catalyzes the transfer of a GlcNAc subunit on undecaprenyl-pyrophosphoryl-MurNAc-pentapeptide (lipid intermediate I) to form undecaprenyl-pyrophosphoryl-MurNAc-(pentapeptide)GlcNAc (lipid intermediate II). The polypeptide is UDP-N-acetylglucosamine--N-acetylmuramyl-(pentapeptide) pyrophosphoryl-undecaprenol N-acetylglucosamine transferase (Stutzerimonas stutzeri (strain A1501) (Pseudomonas stutzeri)).